The following is a 426-amino-acid chain: Probable imidazolonepropionase (426 aa).

2 residues coordinate 4-imidazolone-5-propanoate: Tyr158 and His192. Residue Tyr158 coordinates N-formimidoyl-L-glutamate. A Fe(3+)-binding site is contributed by His260. A Zn(2+)-binding site is contributed by His260. Glu263 provides a ligand contact to 4-imidazolone-5-propanoate. Residue Asp334 participates in Fe(3+) binding. Residue Asp334 coordinates Zn(2+). Asn336 contacts N-formimidoyl-L-glutamate.

Belongs to the metallo-dependent hydrolases superfamily. HutI family. The cofactor is Zn(2+). Fe(3+) is required as a cofactor.

The catalysed reaction is 4-imidazolone-5-propanoate + H2O = N-formimidoyl-L-glutamate. The protein operates within amino-acid degradation; L-histidine degradation into L-glutamate; N-formimidoyl-L-glutamate from L-histidine: step 3/3. The chain is Probable imidazolonepropionase (amdhd1) from Dictyostelium discoideum (Social amoeba).